We begin with the raw amino-acid sequence, 342 residues long: Photosystem II assembly lipoprotein Ycf48 (342 aa).

The first 28 residues, 1 to 28, serve as a signal peptide directing secretion; sequence MPVKFPSLKFEQLKQLVLVAAIAVFCVS. A lipid anchor (N-palmitoyl cysteine) is attached at Cys-29. A lipid anchor (S-diacylglycerol cysteine) is attached at Cys-29. Positions 196–220 match the Arg-rich patch motif; it reads RGNFYSTWAPGQTEWTPHNRNSSRR. Positions 340–342 are excised as a propeptide; that stretch reads MVP.

Belongs to the Ycf48 family. In terms of assembly, part of early PSII assembly complexes which includes D1 (psbA) and PsbI; not found in mature PSII. By two-hybrid analysis in yeast interacts with precursor and intermediate forms of D1, but less with mature D1. Binds to the lumenal side of PSI and PSII complexes. Coimmunoprecipitates with YidC. Purified chlorophyll- and carotenoid-containing photosystem II (PSII) assembly intermediate complex RCII* (iD1, D1, D2, PsbE, PsbF, PsbI, Ycf39, Ycf48, HliC and HliD). Post-translationally, the last 3 residues are removed in the mature protein.

It is found in the cellular thylakoid membrane. In terms of biological role, a factor required for optimal assembly of photosystem II (PSII) which acts in the early stages of PSII assembly. Also plays a role in replacement of photodamaged D1 (psbA). May interact with precursor D1 to prevent its premature processing before association with D2 (psbD). May also play a role in chlorophyll insertion into chlorophyll-binding proteins. Increasing levels of chlorophyll precursors partially suppresses deletion of this protein, supporting the idea that Ycf48 assists YidC in synthesis of chlorophyll-binding proteins. The Ycf39-Hlip complex binds D1 at an early stage of PSII assembly along with Ycf48, ribosomes and ChlG, the last enzyme in chlorophyll biosynthesis; it may be involved in chlorophyll reuse and delivery to D1 in the initial stages of PSII assembly. The chain is Photosystem II assembly lipoprotein Ycf48 from Synechocystis sp. (strain ATCC 27184 / PCC 6803 / Kazusa).